The following is a 620-amino-acid chain: Chaperone protein HscA homolog (620 aa).

This sequence belongs to the heat shock protein 70 family.

In terms of biological role, chaperone involved in the maturation of iron-sulfur cluster-containing proteins. Has a low intrinsic ATPase activity which is markedly stimulated by HscB. This is Chaperone protein HscA homolog from Shewanella sp. (strain MR-7).